The following is a 196-amino-acid chain: uncharacterized protein (196 aa).

Residues 1 to 21 (MNGKQCFCFFLFHLFYTGLFA) form the signal peptide. Residue cysteine 22 is the site of N-palmitoyl cysteine attachment. Residue cysteine 22 is the site of S-diacylglycerol cysteine attachment.

Its subcellular location is the cell membrane. This is an uncharacterized protein from Treponema pallidum (strain Nichols).